A 455-amino-acid polypeptide reads, in one-letter code: MGLSTVPDLLLPLVLLELLVGIYPSGVIGLVPHLGDREKRDSVCPQGKYIHPQNNSICCTKCHKGTYLYNDCPGPGQDTDCRECESGSFTASENHLRHCLSCSKCRKEMGQVEISSCTVDRDTVCGCRKNQYRHYWSENLFQCFNCSLCLNGTVHLSCQEKQNTVCTCHAGFFLRENECVSCSNCKKSLECTKLCLPQIENVKGTEDSGTTVLLPLVIFFGLCLLSLLFIGLMYRYQRWKSKLYSIVCGKSTPEKEGELEGTTTKPLAPNPSFSPTPGFTPTLGFSPVPSSTFTSSSTYTPGDCPNFAAPRREVAPPYQGADPILATALASDPIPNPLQKWEDSAHKPQSLDTDDPATLYAVVENVPPLRWKEFVRRLGLSDHEIDRLELQNGRCLREAQYSMLATWRRRTPRREATLELLGRVLRDMDLLGCLEDIEEALCGPAALPPAPSLLR.

A signal peptide spans 1–29; sequence MGLSTVPDLLLPLVLLELLVGIYPSGVIG. Residues 30 to 211 lie on the Extracellular side of the membrane; sequence LVPHLGDREK…VKGTEDSGTT (182 aa). TNFR-Cys repeat units lie at residues 43–82, 83–125, 126–166, and 167–196; these read VCPQ…TDCR, ECES…DTVC, GCRK…NTVC, and TCHA…KLCL. 7 disulfides stabilise this stretch: cysteine 44/cysteine 58, cysteine 59/cysteine 72, cysteine 62/cysteine 81, cysteine 84/cysteine 99, cysteine 102/cysteine 117, cysteine 105/cysteine 125, and cysteine 127/cysteine 143. Asparagine 54 carries N-linked (GlcNAc...) asparagine glycosylation. 2 N-linked (GlcNAc...) asparagine glycosylation sites follow: asparagine 145 and asparagine 151. 5 cysteine pairs are disulfide-bonded: cysteine 146–cysteine 158, cysteine 149–cysteine 166, cysteine 168–cysteine 179, cysteine 182–cysteine 195, and cysteine 185–cysteine 191. Residues 212-232 traverse the membrane as a helical segment; that stretch reads VLLPLVIFFGLCLLSLLFIGL. Residues 233–455 are Cytoplasmic-facing; it reads MYRYQRWKSK…ALPPAPSLLR (223 aa). The disordered stretch occupies residues 254-273; the sequence is EKEGELEGTTTKPLAPNPSF. The tract at residues 338–348 is N-SMase activation domain (NSD); the sequence is LQKWEDSAHKP. One can recognise a Death domain in the interval 356-441; the sequence is PATLYAVVEN…GCLEDIEEAL (86 aa). Arginine 376 carries (Microbial infection) N-beta-linked (GlcNAc) arginine glycosylation.

Binding of TNF to the extracellular domain leads to homotrimerization. The aggregated death domains provide a novel molecular interface that interacts specifically with the death domain of TRADD. Various TRADD-interacting proteins such as TRAFS, RIPK1 and possibly FADD, are recruited to the complex by their association with TRADD. This complex activates at least two distinct signaling cascades, apoptosis and NF-kappa-B signaling. Interacts with BAG4, BABAM2, FEM1B, GRB2, SQSTM1 and TRPC4AP. Interacts directly with NOL3 (via CARD domain); inhibits TNF-signaling pathway. Interacts with SH3RF2, TRADD and RIPK1. SH3RF2 facilitates the recruitment of RIPK1 and TRADD to TNFRSF1A in a TNF-alpha-dependent process. Interacts with PGLYRP1; this interaction is important for cell death induction. Interacts (via death domain) with MADD (via death domain). In terms of assembly, (Microbial infection) Interacts with mumps virus protein SH; this interaction inhibits downstream NF-kappa-B pathway activation. As to quaternary structure, (Microbial infection) Interacts with HCV core protein. (Microbial infection) Interacts with human cytomegalovirus/HHV-5 protein UL138. In terms of assembly, (Microbial infection) Interacts with host TNFRSF1A; this interaction leads to the stimulation of both surface expression and shedding of TNFRSF1A. The soluble form is produced from the membrane form by proteolytic processing. In terms of processing, (Microbial infection) Glycosylated at Arg-376 by enteropathogenic E.coli protein NleB1 and S.typhimurium protein Ssek3: arginine GlcNAcylation prevents homotypic/heterotypic death domain interactions.

The protein localises to the cell membrane. Its subcellular location is the golgi apparatus membrane. The protein resides in the secreted. Receptor for TNFSF2/TNF-alpha and homotrimeric TNFSF1/lymphotoxin-alpha. The adapter molecule FADD recruits caspase-8 to the activated receptor. The resulting death-inducing signaling complex (DISC) performs caspase-8 proteolytic activation which initiates the subsequent cascade of caspases (aspartate-specific cysteine proteases) mediating apoptosis. Contributes to the induction of non-cytocidal TNF effects including anti-viral state and activation of the acid sphingomyelinase. The sequence is that of Tumor necrosis factor receptor superfamily member 1A (TNFRSF1A) from Homo sapiens (Human).